We begin with the raw amino-acid sequence, 251 residues long: Flap endonuclease Xni (251 aa).

Position 104 (D104) interacts with Mg(2+). The 90-residue stretch at 160–249 folds into the 5'-3' exonuclease domain; that stretch reads VQPQQLPDYW…IDGNLQQLRL (90 aa). 5 residues coordinate K(+): L171, A172, P180, V182, and I185. Positions 184-189 are interaction with DNA; the sequence is GIGPKS.

It belongs to the Xni family. Requires Mg(2+) as cofactor. K(+) is required as a cofactor.

Has flap endonuclease activity. During DNA replication, flap endonucleases cleave the 5'-overhanging flap structure that is generated by displacement synthesis when DNA polymerase encounters the 5'-end of a downstream Okazaki fragment. The protein is Flap endonuclease Xni of Escherichia coli O45:K1 (strain S88 / ExPEC).